Here is a 488-residue protein sequence, read N- to C-terminus: GTPase Der (488 aa).

2 EngA-type G domains span residues 3 to 166 (PVVA…AEAM) and 199 to 372 (IKLA…DSAT). GTP is bound by residues 9 to 16 (GRPNVGKS), 56 to 60 (DTGGI), 118 to 121 (NKVD), 205 to 212 (GKPNVGKS), 252 to 256 (DTAGV), and 317 to 320 (NKWD). One can recognise a KH-like domain in the interval 373–457 (RRVSTSMLTR…PIQLRFQEGD (85 aa)). Residues 460-488 (FENKTEKLTMSQERRRKRAQSHIKDRKTK) are disordered. The segment covering 473 to 488 (RRRKRAQSHIKDRKTK) has biased composition (basic residues).

The protein belongs to the TRAFAC class TrmE-Era-EngA-EngB-Septin-like GTPase superfamily. EngA (Der) GTPase family. Associates with the 50S ribosomal subunit.

GTPase that plays an essential role in the late steps of ribosome biogenesis. This Shewanella baltica (strain OS223) protein is GTPase Der.